The primary structure comprises 472 residues: Glutamine synthetase (472 aa).

Positions Tyr-17 to Thr-101 constitute a GS beta-grasp domain. The GS catalytic domain maps to Pro-109 to Ala-472. Mg(2+)-binding residues include Glu-134 and Glu-136. ATP is bound at residue Glu-212. Mg(2+)-binding residues include Glu-217 and Glu-225. L-glutamate-binding positions include Asn-269–Gly-270 and Gly-270. A Mg(2+)-binding site is contributed by His-274. ATP contacts are provided by residues Asn-276–Ser-278 and Ser-278. The L-glutamate site is built by Arg-326, Glu-332, and Arg-344. The ATP site is built by Arg-344, Arg-349, and Lys-357. Residue Glu-362 participates in Mg(2+) binding. Arg-364 provides a ligand contact to L-glutamate. Position 402 is an O-AMP-tyrosine (Tyr-402).

This sequence belongs to the glutamine synthetase family. As to quaternary structure, oligomer of 12 subunits arranged in the form of two hexameric ring. Mg(2+) serves as cofactor.

It localises to the cytoplasm. It catalyses the reaction L-glutamate + NH4(+) + ATP = L-glutamine + ADP + phosphate + H(+). With respect to regulation, the activity of this enzyme could be controlled by adenylation under conditions of abundant glutamine. Its function is as follows. Catalyzes the ATP-dependent biosynthesis of glutamine from glutamate and ammonia. The protein is Glutamine synthetase of Pasteurella multocida (strain Pm70).